We begin with the raw amino-acid sequence, 208 residues long: Probable GTP-binding protein EngB (208 aa).

Positions Leu-23–Thr-205 constitute an EngB-type G domain. Residues Gly-31–Ser-38, Gly-57–Leu-61, Asp-84–Gly-87, Thr-154–Asp-157, and Phe-182–Ala-184 each bind GTP. Residues Ser-38 and Thr-59 each coordinate Mg(2+).

This sequence belongs to the TRAFAC class TrmE-Era-EngA-EngB-Septin-like GTPase superfamily. EngB GTPase family. Mg(2+) is required as a cofactor.

Functionally, necessary for normal cell division and for the maintenance of normal septation. This is Probable GTP-binding protein EngB from Helicobacter pylori (strain HPAG1).